The primary structure comprises 292 residues: 33 kDa chaperonin (292 aa).

2 cysteine pairs are disulfide-bonded: C229/C231 and C262/C265.

It belongs to the HSP33 family. Under oxidizing conditions two disulfide bonds are formed involving the reactive cysteines. Under reducing conditions zinc is bound to the reactive cysteines and the protein is inactive.

Its subcellular location is the cytoplasm. Its function is as follows. Redox regulated molecular chaperone. Protects both thermally unfolding and oxidatively damaged proteins from irreversible aggregation. Plays an important role in the bacterial defense system toward oxidative stress. This chain is 33 kDa chaperonin, found in Photobacterium profundum (strain SS9).